We begin with the raw amino-acid sequence, 305 residues long: Alpha-N-acetylgalactosaminide alpha-2,6-sialyltransferase 3 (305 aa).

The Cytoplasmic segment spans residues 1–8 (MACILKRK). The chain crosses the membrane as a helical; Signal-anchor for type II membrane protein span at residues 9–28 (PVLVVSFIALCILLLAMRLV). Residues 29 to 305 (NDATFPLLLN…VFTHPNWTLS (277 aa)) lie on the Lumenal side of the membrane. A disulfide bridge connects residues Cys80 and Cys229. 2 N-linked (GlcNAc...) asparagine glycosylation sites follow: Asn239 and Asn301.

It belongs to the glycosyltransferase 29 family. In adult tissues, high expression in brain, lung and heart and to a lesser extent in kidney, mammary gland, spleen, testis and thymus.

It localises to the golgi apparatus membrane. It carries out the reaction an alpha-Neu5Ac-(2-&gt;3)-beta-D-Gal-(1-&gt;3)-D-GlcNAc derivative + CMP-N-acetyl-beta-neuraminate = an alpha-Neu5Ac-(2-&gt;3)-beta-D-Gal-(1-&gt;3)-[alpha-Neu5Ac-(2-&gt;6)]-D-GlcNAc derivative + CMP + H(+). It catalyses the reaction a ganglioside GM1b (d18:1(4E)) + CMP-N-acetyl-beta-neuraminate = a ganglioside GD1alpha (d18:1(4E)) + CMP + H(+). The enzyme catalyses a globoside MSGG + CMP-N-acetyl-beta-neuraminate = a globoside DSGG + CMP + H(+). The catalysed reaction is 3-O-[alpha-Neu5Ac-(2-&gt;3)-beta-D-Gal-(1-&gt;3)-alpha-D-GalNAc]-L-Ser-[protein] + CMP-N-acetyl-beta-neuraminate = a 3-O-{alpha-Neu5Ac-(2-&gt;3)-beta-D-Gal-(1-&gt;3)-[alpha-Neu5Ac-(2-&gt;6)]-alpha-D-GalNAc}-L-seryl-[protein] + CMP + H(+). It carries out the reaction 3-O-[alpha-Neu5Ac-(2-&gt;3)-beta-D-Gal-(1-&gt;3)-alpha-D-GalNAc]-L-Thr-[protein] + CMP-N-acetyl-beta-neuraminate = a 3-O-{alpha-Neu5Ac-(2-&gt;3)-beta-D-Gal-(1-&gt;3)-[alpha-Neu5Ac-(2-&gt;6)]-alpha-D-GalNAc}-L-threonyl-[protein] + CMP + H(+). It participates in protein modification; protein glycosylation. It functions in the pathway glycolipid biosynthesis. In terms of biological role, transfers the sialyl group (N-acetyl-alpha-neuraminyl or NeuAc) from CMP-NeuAc to the GalNAc residue on the NeuAc-alpha-2,3-Gal-beta-1,3-GalNAc sequence of glycoproteins and glycolipids forming an alpha-2,6-linkage. Produces branched type disialyl structures by transfer of a sialyl group onto a GalNAc residue inside the backbone core chains. ST6GalNAcIII prefers glycolipids to glycoproteins, predominantly catalyzing the biosynthesis of ganglioside GD1alpha from GM1b. GD1alpha is a critical molecule in the communication and interaction between neuronal cells and their supportive cells, particularly in brain tissues, and functions as an adhesion molecule in the process of metastasis. Sialylation of glycoproteins or glycosphingolipids is very important in tumor development, neuronal development, nerve repair, immunological processes and regulation of hormone sensitivity. The polypeptide is Alpha-N-acetylgalactosaminide alpha-2,6-sialyltransferase 3 (St6galnac3) (Mus musculus (Mouse)).